The primary structure comprises 549 residues: Endoplasmic reticulum mannosyl-oligosaccharide 1,2-alpha-mannosidase (549 aa).

The Cytoplasmic segment spans residues 1–4 (MKNS). Residues 5-24 (VGISIATIVAIIAAIYYVPW) form a helical; Signal-anchor for type II membrane protein membrane-spanning segment. Residues 25 to 354 (YEHFERKSPG…LLASGSTEGL (330 aa)) are Lumenal-facing. 3 N-linked (GlcNAc...) asparagine glycosylation sites follow: N96, N155, and N224. The cysteines at positions 340 and 385 are disulfide-linked. The active-site Proton donor is the E399. A disulfide bond links C468 and C471. T525 provides a ligand contact to Ca(2+).

Belongs to the glycosyl hydrolase 47 family. In terms of assembly, homodimer. Requires Ca(2+) as cofactor.

The protein resides in the endoplasmic reticulum membrane. It catalyses the reaction N(4)-(alpha-D-Man-(1-&gt;2)-alpha-D-Man-(1-&gt;2)-alpha-D-Man-(1-&gt;3)-[alpha-D-Man-(1-&gt;2)-alpha-D-Man-(1-&gt;3)-[alpha-D-Man-(1-&gt;2)-alpha-D-Man-(1-&gt;6)]-alpha-D-Man-(1-&gt;6)]-beta-D-Man-(1-&gt;4)-beta-D-GlcNAc-(1-&gt;4)-beta-D-GlcNAc)-L-asparaginyl-[protein] (N-glucan mannose isomer 9A1,2,3B1,2,3) + 4 H2O = N(4)-(alpha-D-Man-(1-&gt;3)-[alpha-D-Man-(1-&gt;3)-[alpha-D-Man-(1-&gt;6)]-alpha-D-Man-(1-&gt;6)]-beta-D-Man-(1-&gt;4)-beta-D-GlcNAc-(1-&gt;4)-beta-D-GlcNAc)-L-asparaginyl-[protein] (N-glucan mannose isomer 5A1,2) + 4 beta-D-mannose. The catalysed reaction is N(4)-(alpha-D-Man-(1-&gt;2)-alpha-D-Man-(1-&gt;2)-alpha-D-Man-(1-&gt;3)-[alpha-D-Man-(1-&gt;3)-[alpha-D-Man-(1-&gt;2)-alpha-D-Man-(1-&gt;6)]-alpha-D-Man-(1-&gt;6)]-beta-D-Man-(1-&gt;4)-beta-D-GlcNAc-(1-&gt;4)-beta-D-GlcNAc)-L-asparaginyl-[protein] (N-glucan mannose isomer 8A1,2,3B1,3) + 3 H2O = N(4)-(alpha-D-Man-(1-&gt;3)-[alpha-D-Man-(1-&gt;3)-[alpha-D-Man-(1-&gt;6)]-alpha-D-Man-(1-&gt;6)]-beta-D-Man-(1-&gt;4)-beta-D-GlcNAc-(1-&gt;4)-beta-D-GlcNAc)-L-asparaginyl-[protein] (N-glucan mannose isomer 5A1,2) + 3 beta-D-mannose. Its pathway is protein modification; protein glycosylation. Its function is as follows. Involved in glycoprotein quality control as it is important for the targeting of misfolded glycoproteins for degradation. It primarily trims a single alpha-1,2-linked mannose residue from Man(9)GlcNAc(2) to produce Man(8)GlcNAc(2), but at high enzyme concentrations it further trims the carbohydrates to Man(5)GlcNAc(2). This is Endoplasmic reticulum mannosyl-oligosaccharide 1,2-alpha-mannosidase (MNS1) from Saccharomyces cerevisiae (strain ATCC 204508 / S288c) (Baker's yeast).